Consider the following 147-residue polypeptide: NADH-quinone oxidoreductase subunit A (147 aa).

3 consecutive transmembrane segments (helical) span residues 16–36 (FAIFLIVAIGLCCLMLVGGWF), 68–88 (FYLVAMFFVIFDVEALYLFAW), and 97–117 (WVGFVEAAIFIFVLLAGLVYL).

The protein belongs to the complex I subunit 3 family. As to quaternary structure, NDH-1 is composed of 13 different subunits. Subunits NuoA, H, J, K, L, M, N constitute the membrane sector of the complex.

The protein localises to the cell inner membrane. It catalyses the reaction a quinone + NADH + 5 H(+)(in) = a quinol + NAD(+) + 4 H(+)(out). In terms of biological role, NDH-1 shuttles electrons from NADH, via FMN and iron-sulfur (Fe-S) centers, to quinones in the respiratory chain. The immediate electron acceptor for the enzyme in this species is believed to be ubiquinone. Couples the redox reaction to proton translocation (for every two electrons transferred, four hydrogen ions are translocated across the cytoplasmic membrane), and thus conserves the redox energy in a proton gradient. The chain is NADH-quinone oxidoreductase subunit A from Salmonella paratyphi A (strain ATCC 9150 / SARB42).